Reading from the N-terminus, the 414-residue chain is S-adenosylmethionine synthase (414 aa).

His11 serves as a coordination point for ATP. Asp13 provides a ligand contact to Mg(2+). Glu39 serves as a coordination point for K(+). L-methionine contacts are provided by Glu52 and Gln95. Residues Gln95–Leu105 form a flexible loop region. ATP contacts are provided by residues Asp169 to Lys171, Lys245 to Phe246, Asp254, Arg260 to Lys261, Ala277, and Lys281. Residue Asp254 participates in L-methionine binding. Lys285 serves as a coordination point for L-methionine.

It belongs to the AdoMet synthase family. As to quaternary structure, homotetramer; dimer of dimers. Requires Mg(2+) as cofactor. It depends on K(+) as a cofactor.

The protein resides in the cytoplasm. It catalyses the reaction L-methionine + ATP + H2O = S-adenosyl-L-methionine + phosphate + diphosphate. Its pathway is amino-acid biosynthesis; S-adenosyl-L-methionine biosynthesis; S-adenosyl-L-methionine from L-methionine: step 1/1. Functionally, catalyzes the formation of S-adenosylmethionine (AdoMet) from methionine and ATP. The overall synthetic reaction is composed of two sequential steps, AdoMet formation and the subsequent tripolyphosphate hydrolysis which occurs prior to release of AdoMet from the enzyme. In Synechococcus sp. (strain JA-3-3Ab) (Cyanobacteria bacterium Yellowstone A-Prime), this protein is S-adenosylmethionine synthase.